The chain runs to 173 residues: Alpha-crystallin A chain (173 aa).

Position 1 is an N-acetylmethionine (Met1). The interval 1-63 (MDIAIQHPWF…RTVLDSGISE (63 aa)) is required for complex formation with BFSP1 and BFSP2. A Deamidated glutamine; partial modification is found at Gln6. Lys11 is a glycosylation site (N-linked (Glc) (glycation) lysine). Ser45 bears the Phosphoserine mark. Gln50 bears the Deamidated glutamine; partial mark. Residues 52–162 (LFRTVLDSGI…GHSERAIPVS (111 aa)) enclose the sHSP domain. The residue at position 70 (Lys70) is an N6-acetyllysine. The N-linked (Glc) (glycation) lysine glycan is linked to Lys78. Residue Gln90 is modified to Deamidated glutamine; partial. The residue at position 99 (Lys99) is an N6-acetyllysine. His100 contributes to the Zn(2+) binding site. The residue at position 101 (Asn101) is a Deamidated asparagine; partial. 2 residues coordinate Zn(2+): Glu102 and His107. Ser122 is subject to Phosphoserine. The residue at position 123 (Asn123) is a Deamidated asparagine; partial. Positions 144–173 (PKIPSGVDAGHSERAIPVSREEKPSSAPSS) are disordered. Over residues 153-167 (GHSERAIPVSREEKP) the composition is skewed to basic and acidic residues. Zn(2+) is bound at residue His154. The segment at 157–163 (RAIPVSR) is important for oligomerization. A glycan (O-linked (GlcNAc) serine) is linked at Ser162.

Belongs to the small heat shock protein (HSP20) family. Heteromer composed of three CRYAA and one CRYAB subunits. Inter-subunit bridging via zinc ions enhances stability, which is crucial as there is no protein turn over in the lens. Can also form homodimers and homotetramers (dimers of dimers) which serve as the building blocks of homooligomers. Within homooligomers, the zinc-binding motif is created from residues of 3 different molecules. His-100 and Glu-102 from one molecule are ligands of the zinc ion, and His-107 and His-154 residues from additional molecules complete the site with tetrahedral coordination geometry. Part of a complex required for lens intermediate filament formation composed of BFSP1, BFSP2 and CRYAA. Acetylation at Lys-70 may increase chaperone activity. Post-translationally, undergoes age-dependent proteolytical cleavage at the C-terminus.

Its subcellular location is the cytoplasm. It localises to the nucleus. In terms of biological role, contributes to the transparency and refractive index of the lens. Acts as a chaperone, preventing aggregation of various proteins under a wide range of stress conditions. Required for the correct formation of lens intermediate filaments as part of a complex composed of BFSP1, BFSP2 and CRYAA. The polypeptide is Alpha-crystallin A chain (CRYAA) (Bos taurus (Bovine)).